Consider the following 214-residue polypeptide: Protein-L-isoaspartate O-methyltransferase (214 aa).

The active site involves S63.

It belongs to the methyltransferase superfamily. L-isoaspartyl/D-aspartyl protein methyltransferase family.

The protein resides in the cytoplasm. The catalysed reaction is [protein]-L-isoaspartate + S-adenosyl-L-methionine = [protein]-L-isoaspartate alpha-methyl ester + S-adenosyl-L-homocysteine. Catalyzes the methyl esterification of L-isoaspartyl residues in peptides and proteins that result from spontaneous decomposition of normal L-aspartyl and L-asparaginyl residues. It plays a role in the repair and/or degradation of damaged proteins. This is Protein-L-isoaspartate O-methyltransferase from Desulfotalea psychrophila (strain LSv54 / DSM 12343).